A 103-amino-acid polypeptide reads, in one-letter code: N(4)-acetylcytidine amidohydrolase (103 aa).

One can recognise an ASCH domain in the interval I6–K101. The active-site Proton acceptor is the K21. T24 serves as the catalytic Nucleophile. E74 (proton donor) is an active-site residue.

The protein belongs to the N(4)-acetylcytidine amidohydrolase family.

The catalysed reaction is N(4)-acetylcytidine + H2O = cytidine + acetate + H(+). The enzyme catalyses N(4)-acetyl-2'-deoxycytidine + H2O = 2'-deoxycytidine + acetate + H(+). It carries out the reaction N(4)-acetylcytosine + H2O = cytosine + acetate + H(+). Catalyzes the hydrolysis of N(4)-acetylcytidine (ac4C). This Escherichia coli (strain K12 / MC4100 / BW2952) protein is N(4)-acetylcytidine amidohydrolase (yqfB).